The sequence spans 258 residues: MARRRQIYEGKAKILYEGPEPGTLIQYFKDDATAFNAQKRGTINGKGVLNNRISEHVFTLLGNIGVPTHFIRRLNMREQLIRQVEIVPIEVIVRNVAAGTLSKRLGIEEGTQLPRTLIEYCYKDDALGDPLVAEEHIACFNWCSQDELHDIQDMAIRINDFMSGMFAAVGIRLVDFKLEFGRLYEGDFSRIILADEISPDGCRLWDMTTNEKLDKDRFRRDLGGEVEAYQEVARRLGLLPEGGDNAVLDLESHRKKKG.

This sequence belongs to the SAICAR synthetase family.

The enzyme catalyses 5-amino-1-(5-phospho-D-ribosyl)imidazole-4-carboxylate + L-aspartate + ATP = (2S)-2-[5-amino-1-(5-phospho-beta-D-ribosyl)imidazole-4-carboxamido]succinate + ADP + phosphate + 2 H(+). Its pathway is purine metabolism; IMP biosynthesis via de novo pathway; 5-amino-1-(5-phospho-D-ribosyl)imidazole-4-carboxamide from 5-amino-1-(5-phospho-D-ribosyl)imidazole-4-carboxylate: step 1/2. This is Phosphoribosylaminoimidazole-succinocarboxamide synthase from Sphingopyxis alaskensis (strain DSM 13593 / LMG 18877 / RB2256) (Sphingomonas alaskensis).